The following is a 177-amino-acid chain: MAIRLILEAPDPRLRTISTPVEAVDDELRALIADMFETMYDAPGIGLAAIQVGVPKRVLVIDLQEEEDAEGKPIRHPRVFINPELFDPSEEQSVYNEGCLSVPEQYAEVERPAVIHARWLDEQGAKHEERLEGLLATCLQHEMDHLEGILFIDHLSRLKREMVMKKLEKARRARKAA.

Fe cation contacts are provided by Cys99 and His141. Glu142 is a catalytic residue. Position 145 (His145) interacts with Fe cation.

It belongs to the polypeptide deformylase family. Fe(2+) is required as a cofactor.

The enzyme catalyses N-terminal N-formyl-L-methionyl-[peptide] + H2O = N-terminal L-methionyl-[peptide] + formate. Its function is as follows. Removes the formyl group from the N-terminal Met of newly synthesized proteins. Requires at least a dipeptide for an efficient rate of reaction. N-terminal L-methionine is a prerequisite for activity but the enzyme has broad specificity at other positions. The polypeptide is Peptide deformylase (Rhizorhabdus wittichii (strain DSM 6014 / CCUG 31198 / JCM 15750 / NBRC 105917 / EY 4224 / RW1) (Sphingomonas wittichii)).